The sequence spans 311 residues: Porphobilinogen deaminase (311 aa).

Cys243 is modified (S-(dipyrrolylmethanemethyl)cysteine).

Belongs to the HMBS family. As to quaternary structure, monomer. Dipyrromethane serves as cofactor.

It catalyses the reaction 4 porphobilinogen + H2O = hydroxymethylbilane + 4 NH4(+). Its pathway is porphyrin-containing compound metabolism; protoporphyrin-IX biosynthesis; coproporphyrinogen-III from 5-aminolevulinate: step 2/4. Functionally, tetrapolymerization of the monopyrrole PBG into the hydroxymethylbilane pre-uroporphyrinogen in several discrete steps. The chain is Porphobilinogen deaminase from Aliivibrio fischeri (strain ATCC 700601 / ES114) (Vibrio fischeri).